The chain runs to 307 residues: Aspartate carbamoyltransferase catalytic subunit (307 aa).

The carbamoyl phosphate site is built by R54 and T55. Position 83 (K83) interacts with L-aspartate. R104, H132, and Q135 together coordinate carbamoyl phosphate. Positions 165 and 228 each coordinate L-aspartate. Carbamoyl phosphate contacts are provided by L267 and P268.

It belongs to the aspartate/ornithine carbamoyltransferase superfamily. ATCase family. Heterododecamer (2C3:3R2) of six catalytic PyrB chains organized as two trimers (C3), and six regulatory PyrI chains organized as three dimers (R2).

The catalysed reaction is carbamoyl phosphate + L-aspartate = N-carbamoyl-L-aspartate + phosphate + H(+). The protein operates within pyrimidine metabolism; UMP biosynthesis via de novo pathway; (S)-dihydroorotate from bicarbonate: step 2/3. Catalyzes the condensation of carbamoyl phosphate and aspartate to form carbamoyl aspartate and inorganic phosphate, the committed step in the de novo pyrimidine nucleotide biosynthesis pathway. In Clostridium acetobutylicum (strain ATCC 824 / DSM 792 / JCM 1419 / IAM 19013 / LMG 5710 / NBRC 13948 / NRRL B-527 / VKM B-1787 / 2291 / W), this protein is Aspartate carbamoyltransferase catalytic subunit.